The primary structure comprises 401 residues: Mannonate dehydratase (401 aa).

This sequence belongs to the mannonate dehydratase family. Requires Fe(2+) as cofactor. Mn(2+) is required as a cofactor.

The enzyme catalyses D-mannonate = 2-dehydro-3-deoxy-D-gluconate + H2O. It functions in the pathway carbohydrate metabolism; pentose and glucuronate interconversion. Functionally, catalyzes the dehydration of D-mannonate. This Brucella melitensis biotype 2 (strain ATCC 23457) protein is Mannonate dehydratase.